The primary structure comprises 302 residues: Elongation factor Ts (302 aa).

Positions 82 to 85 are involved in Mg(2+) ion dislocation from EF-Tu; the sequence is TDFV.

This sequence belongs to the EF-Ts family.

It localises to the cytoplasm. Functionally, associates with the EF-Tu.GDP complex and induces the exchange of GDP to GTP. It remains bound to the aminoacyl-tRNA.EF-Tu.GTP complex up to the GTP hydrolysis stage on the ribosome. This is Elongation factor Ts from Nitrosospira multiformis (strain ATCC 25196 / NCIMB 11849 / C 71).